The following is a 43-amino-acid chain: Protein PsbN (43 aa).

Residues 7 to 27 (VAIFISGLLVSFTGYALYTAF) form a helical membrane-spanning segment.

It belongs to the PsbN family.

It localises to the plastid. The protein resides in the chloroplast thylakoid membrane. May play a role in photosystem I and II biogenesis. This Sagittaria latifolia (Broadleaf arrowhead) protein is Protein PsbN.